The following is a 421-amino-acid chain: Histidine--tRNA ligase (421 aa).

This sequence belongs to the class-II aminoacyl-tRNA synthetase family. Homodimer.

It localises to the cytoplasm. The catalysed reaction is tRNA(His) + L-histidine + ATP = L-histidyl-tRNA(His) + AMP + diphosphate + H(+). The sequence is that of Histidine--tRNA ligase from Coxiella burnetii (strain CbuG_Q212) (Coxiella burnetii (strain Q212)).